We begin with the raw amino-acid sequence, 239 residues long: 1-(5-phosphoribosyl)-5-[(5-phosphoribosylamino)methylideneamino] imidazole-4-carboxamide isomerase (239 aa).

The active-site Proton acceptor is the Asp-8. The Proton donor role is filled by Asp-130.

This sequence belongs to the HisA/HisF family.

Its subcellular location is the cytoplasm. It carries out the reaction 1-(5-phospho-beta-D-ribosyl)-5-[(5-phospho-beta-D-ribosylamino)methylideneamino]imidazole-4-carboxamide = 5-[(5-phospho-1-deoxy-D-ribulos-1-ylimino)methylamino]-1-(5-phospho-beta-D-ribosyl)imidazole-4-carboxamide. Its pathway is amino-acid biosynthesis; L-histidine biosynthesis; L-histidine from 5-phospho-alpha-D-ribose 1-diphosphate: step 4/9. This Lachnoclostridium phytofermentans (strain ATCC 700394 / DSM 18823 / ISDg) (Clostridium phytofermentans) protein is 1-(5-phosphoribosyl)-5-[(5-phosphoribosylamino)methylideneamino] imidazole-4-carboxamide isomerase.